A 746-amino-acid chain; its full sequence is NAD(P)H-quinone oxidoreductase subunit 5, chloroplastic (746 aa).

Helical transmembrane passes span 9–29 (WMIPFIPLPVPILLGMGLLLF), 40–60 (WAFLSIFLLSIVMIFSIDLSI), 89–109 (IDPLTSIMSILITTVGILVLI), 125–145 (FAYMSFFNTSMLGLVTSSNLI), 147–167 (VYIFWELVGMCSYLLIGFWFT), 185–205 (GDFGLLLGILGLYWITGSFEF), 219–239 (NQVHFLFVTLCAFLLFAGPVA), 258–278 (TPISALIHAATMVAAGIFLVA), 280–300 (LLPLFIGIPYIMYLISLIGII), 327–347 (LGYMMLALGMGSYRAALFHLI), 354–374 (ALLFLGSGSIIHSMEAVVGYS), 396–416 (TTFLLGTLSLCGIPPLACFWS), 425–445 (WLYSPIFAVIACSTAGLTAFY), 546–566 (ILFPMLILVLFTLFVGAIGIP), 607–627 (FSVSIAFFGIFIAFFLYKPAY), and 723–743 (LLLYLFYVLIFLFIYYFLNLL).

It belongs to the complex I subunit 5 family. In terms of assembly, NDH is composed of at least 16 different subunits, 5 of which are encoded in the nucleus.

It is found in the plastid. The protein resides in the chloroplast thylakoid membrane. The enzyme catalyses a plastoquinone + NADH + (n+1) H(+)(in) = a plastoquinol + NAD(+) + n H(+)(out). It catalyses the reaction a plastoquinone + NADPH + (n+1) H(+)(in) = a plastoquinol + NADP(+) + n H(+)(out). Its function is as follows. NDH shuttles electrons from NAD(P)H:plastoquinone, via FMN and iron-sulfur (Fe-S) centers, to quinones in the photosynthetic chain and possibly in a chloroplast respiratory chain. The immediate electron acceptor for the enzyme in this species is believed to be plastoquinone. Couples the redox reaction to proton translocation, and thus conserves the redox energy in a proton gradient. This Carica papaya (Papaya) protein is NAD(P)H-quinone oxidoreductase subunit 5, chloroplastic (ndhF).